We begin with the raw amino-acid sequence, 308 residues long: Solute carrier family 25 member 47 (308 aa).

Solcar repeat units follow at residues 1–80 (MDFV…CLAH), 93–206 (PTKA…LCEW), and 215–302 (PDVP…VLRL). Helical transmembrane passes span 3 to 23 (FVAGAIGGVCGVAVGYPLDTV), 49 to 69 (VWGFYRGLSLPVCTVSLVSSV), 98 to 116 (ITLSGCASGLVRVFLTSPT), 190 to 210 (GHSFATYFLSYAVLCEWLSPA), 217 to 237 (VPGVLVAGGCAGVLAWAVATP), and 273 to 293 (VLFKGLVLNCCRAFPVNMVVF).

It belongs to the mitochondrial carrier (TC 2.A.29) family. As to expression, specifically expressed in liver.

It localises to the mitochondrion inner membrane. The protein localises to the mitochondrion outer membrane. It carries out the reaction NAD(+)(in) = NAD(+)(out). The catalysed reaction is acetyl-CoA(in) = acetyl-CoA(out). In terms of biological role, mitochondrial NAD(+) transporter that acts as a 'metabolic gate' in hepatic lipogenesis. Provides NAD(+) substrate to mitochondrial SIRT3 deacetylase and enables its NAD(+)-dependent activities in mitochondrial energy metabolism. This triggers downstream activation of PRKAA1/AMPK-alpha signaling cascade that negatively regulates sterol regulatory element-binding protein (SREBP) transcriptional activities and ATP-consuming lipogenesis to restore cellular energy balance. May transport other mitochondrial metabolites having an aromatic nucleotide and phosphate groups, such as acetyl-CoA. Does not transport amino acids. The transport mechanism remains to be elucidated. In Homo sapiens (Human), this protein is Solute carrier family 25 member 47.